The following is a 391-amino-acid chain: Elongation factor Tu (391 aa).

Positions 10 to 201 (KPHVNIGTIG…AVDSYIPTPE (192 aa)) constitute a tr-type G domain. The interval 19–26 (GHVDHGKT) is G1. 19–26 (GHVDHGKT) contacts GTP. Mg(2+) is bound at residue Thr26. The segment at 55–59 (GITIS) is G2. Residues 76–79 (DCPG) are G3. Residues 76 to 80 (DCPGH) and 131 to 134 (NKCD) contribute to the GTP site. The interval 131-134 (NKCD) is G4. The segment at 169–171 (SAL) is G5.

It belongs to the TRAFAC class translation factor GTPase superfamily. Classic translation factor GTPase family. EF-Tu/EF-1A subfamily. In terms of assembly, monomer.

It is found in the cytoplasm. The enzyme catalyses GTP + H2O = GDP + phosphate + H(+). GTP hydrolase that promotes the GTP-dependent binding of aminoacyl-tRNA to the A-site of ribosomes during protein biosynthesis. This Brucella canis (strain ATCC 23365 / NCTC 10854 / RM-666) protein is Elongation factor Tu.